A 196-amino-acid chain; its full sequence is Imidazoleglycerol-phosphate dehydratase (196 aa).

The protein belongs to the imidazoleglycerol-phosphate dehydratase family.

It localises to the cytoplasm. The enzyme catalyses D-erythro-1-(imidazol-4-yl)glycerol 3-phosphate = 3-(imidazol-4-yl)-2-oxopropyl phosphate + H2O. The protein operates within amino-acid biosynthesis; L-histidine biosynthesis; L-histidine from 5-phospho-alpha-D-ribose 1-diphosphate: step 6/9. The sequence is that of Imidazoleglycerol-phosphate dehydratase from Desulforamulus reducens (strain ATCC BAA-1160 / DSM 100696 / MI-1) (Desulfotomaculum reducens).